We begin with the raw amino-acid sequence, 201 residues long: Fimbrial protein FimX (201 aa).

An N-terminal signal peptide occupies residues 1-21 (MQAKTFLLGAALAGVALAAHA). An intrachain disulfide couples C37 to C79.

This sequence belongs to the fimbrial protein family.

The protein resides in the fimbrium. Functionally, bordetella pertussis is the causative agent of whooping cough. An essential step in the disease process is the attachment of the bacteria to the ciliated epithelium of the respiratory tract, enabling the organism to resist normal host-clearance mechanisms. It is unclear which bacterial cell surface component are responsible for adherence but the fimbriae of B.pertussis are prime candidates for being involved in this process. The polypeptide is Fimbrial protein FimX (fimX) (Bordetella pertussis (strain Tohama I / ATCC BAA-589 / NCTC 13251)).